The chain runs to 513 residues: TRAF3-interacting JNK-activating modulator (513 aa).

Disordered regions lie at residues methionine 1–serine 96, serine 130–glutamate 171, and serine 381–lysine 402. At methionine 1–glutamine 485 the chain is on the cytoplasmic side. 2 stretches are compositionally biased toward basic and acidic residues: residues glutamate 17–glutamate 31 and arginine 69–alanine 79. A coiled-coil region spans residues methionine 266–glutamine 488. A compositionally biased stretch (polar residues) spans glycine 386–glutamine 397. The helical; Anchor for type IV membrane protein transmembrane segment at cysteine 486–alanine 506 threads the bilayer. Residues asparagine 507–isoleucine 513 are Extracellular-facing.

Interacts (via its coiled-coil domain) with TRAF3 (via isoleucine zipper). Interacts with MAP2K1. Interacts with PPP2CA; this interaction targets PPP2CA to the lysosomes. Interacts with MAVS. Interacts with TBK1. In terms of tissue distribution, expressed in bone marrow, spleen and thymus. Not detected in heart, kidney and liver.

The protein resides in the cell membrane. It localises to the golgi apparatus membrane. It is found in the lysosome membrane. The protein localises to the mitochondrion outer membrane. Functionally, adapter protein that plays essential roles in both innate and adaptive immunity. Plays a crucial role in the regulation of thymocyte development. Mechanistically, mediates TCR-stimulated activation through recruiting MAP2K1/MEK1 to the Golgi and, thereby, facilitating the interaction of MAP2K1/MEK1 with its activator BRAF. Also plays an essential role in regulatory T-cell stability and function by recruiting the serine-threonine phosphatase catalytic subunit (PPP2CA) to the lysosome, thereby facilitating the interaction of PP2Ac with the mTORC1 component RPTOR and restricting glycolytic metabolism. Positively regulates TLR4 signaling activity in macrophage-mediated inflammation by acting as a molecular clamp to facilitate LPS-induced translocation of TLR4 to lipid rafts. In response to viral infection, facilitates the recruitment of TRAF3 to MAVS within mitochondria leading to IRF3 activation and interferon production. However, participates in the maintenance of immune homeostasis and the prevention of overzealous innate immunity by promoting 'Lys-48'-dependent ubiquitination of TBK1. The sequence is that of TRAF3-interacting JNK-activating modulator (Traf3ip3) from Mus musculus (Mouse).